Reading from the N-terminus, the 189-residue chain is ATP synthase subunit b 1 (189 aa).

Residues 32–52 (TYFASQLFWLTIAFVILYIAL) traverse the membrane as a helical segment.

The protein belongs to the ATPase B chain family. In terms of assembly, F-type ATPases have 2 components, F(1) - the catalytic core - and F(0) - the membrane proton channel. F(1) has five subunits: alpha(3), beta(3), gamma(1), delta(1), epsilon(1). F(0) has three main subunits: a(1), b(2) and c(10-14). The alpha and beta chains form an alternating ring which encloses part of the gamma chain. F(1) is attached to F(0) by a central stalk formed by the gamma and epsilon chains, while a peripheral stalk is formed by the delta and b chains.

Its subcellular location is the cell inner membrane. Its function is as follows. F(1)F(0) ATP synthase produces ATP from ADP in the presence of a proton or sodium gradient. F-type ATPases consist of two structural domains, F(1) containing the extramembraneous catalytic core and F(0) containing the membrane proton channel, linked together by a central stalk and a peripheral stalk. During catalysis, ATP synthesis in the catalytic domain of F(1) is coupled via a rotary mechanism of the central stalk subunits to proton translocation. Functionally, component of the F(0) channel, it forms part of the peripheral stalk, linking F(1) to F(0). In Maricaulis maris (strain MCS10) (Caulobacter maris), this protein is ATP synthase subunit b 1.